A 2234-amino-acid chain; its full sequence is Bridge-like lipid transfer protein family member 2 (2234 aa).

Residues Met-1–Thr-31 form the signal peptide. The tract at residues Leu-29–Pro-108 is transmembrane domain. Ser-563 carries the post-translational modification Phosphoserine. Residues Gln-1496–Ser-1529 form a disordered region. Residues Ile-1814–Asp-1885 are a coiled coil. Phosphoserine is present on residues Ser-1846 and Ser-2090.

Belongs to the SABRE family.

The protein localises to the cell membrane. Its subcellular location is the endoplasmic reticulum membrane. It is found in the mitochondrion membrane. Tube-forming lipid transport protein which binds to phosphatidylinositols and affects phosphatidylinositol-4,5-bisphosphate (PtdIns-4,5-P2) distribution. This Mus musculus (Mouse) protein is Bridge-like lipid transfer protein family member 2 (Bltp2).